A 393-amino-acid chain; its full sequence is Digeranylgeranylglycerophospholipid reductase (393 aa).

The FAD site is built by Ala13, Asp32, Cys43, Ala44, Gly46, Arg95, Val119, Asp274, and Gly286. Residues Lys327 and Gly363 each coordinate a 2,3-bis-O-(geranylgeranyl)-sn-glycerol 1-phospholipid.

This sequence belongs to the geranylgeranyl reductase family. DGGGPL reductase subfamily. It depends on FAD as a cofactor.

It carries out the reaction a 2,3-bis-O-phytanyl-sn-glycerol 1-phospholipid + 8 A = a 2,3-bis-O-(geranylgeranyl)-sn-glycerol 1-phospholipid + 8 AH2. The catalysed reaction is 2,3-bis-O-(phytanyl)-sn-glycerol 1-phosphate + 8 A = 2,3-bis-O-(geranylgeranyl)-sn-glycerol 1-phosphate + 8 AH2. The enzyme catalyses CDP-2,3-bis-O-(geranylgeranyl)-sn-glycerol + 8 AH2 = CDP-2,3-bis-O-(phytanyl)-sn-glycerol + 8 A. It catalyses the reaction archaetidylserine + 8 AH2 = 2,3-bis-O-phytanyl-sn-glycero-3-phospho-L-serine + 8 A. Its pathway is membrane lipid metabolism; glycerophospholipid metabolism. Is involved in the reduction of 2,3-digeranylgeranylglycerophospholipids (unsaturated archaeols) into 2,3-diphytanylglycerophospholipids (saturated archaeols) in the biosynthesis of archaeal membrane lipids. Catalyzes the formation of archaetidic acid (2,3-di-O-phytanyl-sn-glyceryl phosphate) from 2,3-di-O-geranylgeranylglyceryl phosphate (DGGGP) via the hydrogenation of each double bond of the isoprenoid chains. Is also probably able to reduce double bonds of geranyl groups in CDP-2,3-bis-O-(geranylgeranyl)-sn-glycerol and archaetidylserine, thus acting at various stages in the biosynthesis of archaeal membrane lipids. This Pyrococcus furiosus (strain ATCC 43587 / DSM 3638 / JCM 8422 / Vc1) protein is Digeranylgeranylglycerophospholipid reductase.